The primary structure comprises 82 residues: ATP synthase subunit c, chloroplastic (82 aa).

The next 2 helical transmembrane spans lie at Ala-7 to Gly-27 and Leu-57 to Ala-77.

The protein belongs to the ATPase C chain family. As to quaternary structure, F-type ATPases have 2 components, F(1) - the catalytic core - and F(0) - the membrane proton channel. F(1) has five subunits: alpha(3), beta(3), gamma(1), delta(1), epsilon(1). F(0) has four main subunits: a(1), b(1), b'(1) and c(10-14). The alpha and beta chains form an alternating ring which encloses part of the gamma chain. F(1) is attached to F(0) by a central stalk formed by the gamma and epsilon chains, while a peripheral stalk is formed by the delta, b and b' chains.

Its subcellular location is the plastid. It localises to the chloroplast thylakoid membrane. Its function is as follows. F(1)F(0) ATP synthase produces ATP from ADP in the presence of a proton or sodium gradient. F-type ATPases consist of two structural domains, F(1) containing the extramembraneous catalytic core and F(0) containing the membrane proton channel, linked together by a central stalk and a peripheral stalk. During catalysis, ATP synthesis in the catalytic domain of F(1) is coupled via a rotary mechanism of the central stalk subunits to proton translocation. Functionally, key component of the F(0) channel; it plays a direct role in translocation across the membrane. A homomeric c-ring of between 10-14 subunits forms the central stalk rotor element with the F(1) delta and epsilon subunits. This chain is ATP synthase subunit c, chloroplastic, found in Porphyra purpurea (Red seaweed).